Consider the following 269-residue polypeptide: Phosphonates import ATP-binding protein PhnC 2 (269 aa).

Residues 2–246 form the ABC transporter domain; the sequence is LRIDSLSKRY…VLNEIYGEED (245 aa). Position 35–42 (35–42) interacts with ATP; it reads GPSGAGKS. Positions 246–269 are disordered; that stretch reads DWNASGPAQDSEENEAVSAGVATH.

This sequence belongs to the ABC transporter superfamily. Phosphonates importer (TC 3.A.1.9.1) family. The complex is composed of two ATP-binding proteins (PhnC), two transmembrane proteins (PhnE) and a solute-binding protein (PhnD).

Its subcellular location is the cell inner membrane. It catalyses the reaction phosphonate(out) + ATP + H2O = phosphonate(in) + ADP + phosphate + H(+). Functionally, part of the ABC transporter complex PhnCDE involved in phosphonates import. Responsible for energy coupling to the transport system. This Synechococcus sp. (strain JA-2-3B'a(2-13)) (Cyanobacteria bacterium Yellowstone B-Prime) protein is Phosphonates import ATP-binding protein PhnC 2.